The chain runs to 332 residues: 2,3-diketo-L-gulonate reductase (332 aa).

His-44 acts as the Proton donor in catalysis. NAD(+)-binding positions include 168–174 (ITMVDMS), 224–225 (WK), and 304–306 (GHE).

This sequence belongs to the LDH2/MDH2 oxidoreductase family. DlgD subfamily. Homodimer.

The protein localises to the cytoplasm. The catalysed reaction is 3-dehydro-L-gulonate + NAD(+) = 2,3-dioxo-L-gulonate + NADH + H(+). The enzyme catalyses 3-dehydro-L-gulonate + NADP(+) = 2,3-dioxo-L-gulonate + NADPH + H(+). Catalyzes the reduction of 2,3-diketo-L-gulonate in the presence of NADH, to form 3-keto-L-gulonate. This is 2,3-diketo-L-gulonate reductase from Escherichia fergusonii (strain ATCC 35469 / DSM 13698 / CCUG 18766 / IAM 14443 / JCM 21226 / LMG 7866 / NBRC 102419 / NCTC 12128 / CDC 0568-73).